Consider the following 363-residue polypeptide: DNA replication and repair protein RecF (363 aa).

Residue 30–37 (GPNGSGKT) participates in ATP binding.

Belongs to the RecF family.

The protein resides in the cytoplasm. Its function is as follows. The RecF protein is involved in DNA metabolism; it is required for DNA replication and normal SOS inducibility. RecF binds preferentially to single-stranded, linear DNA. It also seems to bind ATP. This is DNA replication and repair protein RecF from Chlorobium phaeobacteroides (strain BS1).